Consider the following 169-residue polypeptide: 6,7-dimethyl-8-ribityllumazine synthase (169 aa).

5-amino-6-(D-ribitylamino)uracil-binding positions include Tyr-30, 61 to 63 (ALE), and 90 to 92 (CVI). Residue 95-96 (ET) coordinates (2S)-2-hydroxy-3-oxobutyl phosphate. His-98 serves as the catalytic Proton donor. Residue Asn-123 coordinates 5-amino-6-(D-ribitylamino)uracil. Arg-137 serves as a coordination point for (2S)-2-hydroxy-3-oxobutyl phosphate.

The protein belongs to the DMRL synthase family.

It catalyses the reaction (2S)-2-hydroxy-3-oxobutyl phosphate + 5-amino-6-(D-ribitylamino)uracil = 6,7-dimethyl-8-(1-D-ribityl)lumazine + phosphate + 2 H2O + H(+). Its pathway is cofactor biosynthesis; riboflavin biosynthesis; riboflavin from 2-hydroxy-3-oxobutyl phosphate and 5-amino-6-(D-ribitylamino)uracil: step 1/2. Catalyzes the formation of 6,7-dimethyl-8-ribityllumazine by condensation of 5-amino-6-(D-ribitylamino)uracil with 3,4-dihydroxy-2-butanone 4-phosphate. This is the penultimate step in the biosynthesis of riboflavin. In Methylorubrum populi (strain ATCC BAA-705 / NCIMB 13946 / BJ001) (Methylobacterium populi), this protein is 6,7-dimethyl-8-ribityllumazine synthase.